A 2144-amino-acid polypeptide reads, in one-letter code: Reducing polyketide synthase PKS2 (2144 aa).

Residues 10–436 (PMPLAIIGMS…GSNSHCIVRA (427 aa)) form the Ketosynthase family 3 (KS3) domain. Catalysis depends on for beta-ketoacyl synthase activity residues cysteine 183, histidine 319, and histidine 360. The segment at 538 to 855 (VFAFTGQGAQ…VPSLHRGQNA (318 aa)) is malonyl-CoA:ACP transacylase (MAT). The segment at 924–1058 (HDLLGSINSS…ALVKCEATTD (135 aa)) is N-terminal hotdog fold. The segment at 924–1214 (HDLLGSINSS…RSYSIDGTTD (291 aa)) is dehydratase (DH) domain. The 314-residue stretch at 924–1237 (HDLLGSINSS…LAVEATLAPQ (314 aa)) folds into the PKS/mFAS DH domain. Residues 1076 to 1237 (HSCVGSPLLY…LAVEATLAPQ (162 aa)) are C-terminal hotdog fold. An enoyl reductase (ER) domain region spans residues 1461–1747 (GMPDSLYLQR…SETDSKKLLL (287 aa)). Residues 1771-1948 (AVYLLVGGSG…PATSLALTAV (178 aa)) are ketoreductase (KR) domain. Residues 2059–2136 (EATQLLLAAI…KIVDSVIVKR (78 aa)) enclose the Carrier domain. Serine 2096 carries the post-translational modification O-(pantetheine 4'-phosphoryl)serine.

It functions in the pathway mycotoxin biosynthesis. In terms of biological role, reducing polyketide synthase (PKS); part of the Tox1A locus, one of the 2 loci that mediate the biosynthesis of T-toxin, a family of linear polyketides 37 to 45 carbons in length, of which the major component is 41 carbons, and which leads to high virulence to maize. One of the PKSs (PKS1 or PKS2) could synthesize a precursor, used subsequently by the other PKS as starter unit, to add additional carbons. Variability in the length of the final carbon backbone C35-47 could be achieved by varying the number of condensation cycles, or use of different starter or extender units or might be due to decarboxylation of the penultimate product, catalyzed by DEC1. Additional proteins are required for the biosynthesis of T-toxin, including oxidoreductases RED1, RED2, RED3, LAM1 and OXI1, as well as esterase TOX9. The chain is Reducing polyketide synthase PKS2 from Cochliobolus heterostrophus (strain C4 / ATCC 48331 / race T) (Southern corn leaf blight fungus).